The following is a 290-amino-acid chain: Short neuropeptide F (290 aa).

The signal sequence occupies residues 1–32 (MFRFNPQLSHGCALALICCLLNLLMMHQPTNA). Residues 33 to 87 (ELSPVVQGEFFLPILPDDHPPNTDTSFGGPISNLYDNLLQREYAGPVVFPNHQVE) constitute a propeptide that is removed on maturation. Phe-100 and Phe-134 each carry phenylalanine amide. A propeptide spanning residues 138–290 (DPTLPQMRRT…IETSSIAPKN (153 aa)) is cleaved from the precursor. A disordered region spans residues 238–290 (VAGYANDGDDTEAQLDEDTSEFQREARKPMRLRWGRSTGKAPQIETSSIAPKN). Acidic residues predominate over residues 244 to 257 (DGDDTEAQLDEDTS). Polar residues predominate over residues 281–290 (IETSSIAPKN).

Belongs to the NPY family.

Its subcellular location is the secreted. In terms of biological role, plays a role in controlling food intake and regulating body size. The chain is Short neuropeptide F from Drosophila pseudoobscura pseudoobscura (Fruit fly).